The chain runs to 444 residues: Putative dipeptidase CPC735_015490 (444 aa).

A signal peptide spans 1–34 (MSQRTEHNGSWLRNAGSLLSVLACVAVLASPASA). Residues His-67, Asp-69, and Glu-178 each coordinate Zn(2+). Cys-118 and Cys-207 are oxidised to a cystine. His-205 serves as a coordination point for substrate. Zn(2+) is bound by residues His-250 and His-271. Arg-282 and Asp-342 together coordinate substrate. Asn-413 carries N-linked (GlcNAc...) asparagine glycosylation.

This sequence belongs to the metallo-dependent hydrolases superfamily. Peptidase M19 family. The cofactor is Zn(2+).

The catalysed reaction is an L-aminoacyl-L-amino acid + H2O = 2 an L-alpha-amino acid. Its function is as follows. Hydrolyzes a wide range of dipeptides. This Coccidioides posadasii (strain C735) (Valley fever fungus) protein is Putative dipeptidase CPC735_015490.